A 115-amino-acid polypeptide reads, in one-letter code: Vespryn (115 aa).

Residues 1–15 form the signal peptide; sequence MTWLLLCLLAQYENG. Positions 22-115 constitute a B30.2/SPRY domain; that stretch reads SSSAKPYKTS…VKRKDHLRLT (94 aa).

This sequence belongs to the ohanin/vespryn family. Expressed by the venom gland.

It localises to the secreted. In terms of biological role, neurotoxin that produces dose-dependent hypolocomotion and hyperalgesia in mice. May directly act on the central nervous system, as it is 6500-fold more potent when administered intracerebroventricularly than intraperitoneal. This Pogona barbata (Bearded dragon) protein is Vespryn.